The following is a 273-amino-acid chain: 5-deoxy-glucuronate isomerase (273 aa).

Belongs to the isomerase IolB family.

The catalysed reaction is 5-deoxy-D-glucuronate = 5-dehydro-2-deoxy-D-gluconate. Its pathway is polyol metabolism; myo-inositol degradation into acetyl-CoA; acetyl-CoA from myo-inositol: step 4/7. Functionally, involved in the isomerization of 5-deoxy-glucuronate (5DG) to 5-dehydro-2-deoxy-D-gluconate (DKG or 2-deoxy-5-keto-D-gluconate). This Listeria monocytogenes serovar 1/2a (strain ATCC BAA-679 / EGD-e) protein is 5-deoxy-glucuronate isomerase.